The following is a 205-amino-acid chain: Golgi apparatus membrane protein TVP23 homolog B (205 aa).

Met1 carries the N-acetylmethionine modification. The tract at residues 1–21 (MLQQDSNDDTEDVSLFDAEEE) is disordered. The next 4 membrane-spanning stretches (helical) occupy residues 34–53 (PVAS…VYLL), 54–72 (CGLL…ILLL), 126–146 (IFWL…FSAL), and 152–172 (KWLA…YGYI).

It belongs to the TVP23 family.

Its subcellular location is the membrane. The protein is Golgi apparatus membrane protein TVP23 homolog B (TVP23B) of Homo sapiens (Human).